The following is a 92-amino-acid chain: Small ribosomal subunit protein uS19c (92 aa).

Belongs to the universal ribosomal protein uS19 family.

It is found in the plastid. The protein resides in the chloroplast. In terms of biological role, protein S19 forms a complex with S13 that binds strongly to the 16S ribosomal RNA. In Gossypium barbadense (Sea Island cotton), this protein is Small ribosomal subunit protein uS19c.